A 395-amino-acid chain; its full sequence is Acetate kinase (395 aa).

Asparagine 7 is a binding site for Mg(2+). Lysine 14 is an ATP binding site. Arginine 85 is a binding site for substrate. Residue aspartate 142 is the Proton donor/acceptor of the active site. ATP-binding positions include 202 to 206 (HLGNG), 277 to 279 (DMR), and 325 to 329 (GIGEN). Position 378 (glutamate 378) interacts with Mg(2+).

It belongs to the acetokinase family. In terms of assembly, homodimer. Requires Mg(2+) as cofactor. Mn(2+) serves as cofactor.

Its subcellular location is the cytoplasm. The catalysed reaction is acetate + ATP = acetyl phosphate + ADP. The protein operates within metabolic intermediate biosynthesis; acetyl-CoA biosynthesis; acetyl-CoA from acetate: step 1/2. In terms of biological role, catalyzes the formation of acetyl phosphate from acetate and ATP. Can also catalyze the reverse reaction. This Deinococcus geothermalis (strain DSM 11300 / CIP 105573 / AG-3a) protein is Acetate kinase.